The following is an 898-amino-acid chain: MNKRRKFLFASVLAVQNSNFIYPSCQRCFSKIILESKRFTCPKCGSSGDTGSTNYRYKLSLKVAESSKLFFITVFGSCLDTFFGLTATGLHRYLGDSIKNLETLDSGRTQSLLTTAVEKCFVGQSFVFGVTNFGDVCGHDSDSSNFQQPCCKHRGEVRTLVASQIILPSPHVKGFTVIAYLHPLLHKKPHCGSQEHSSQSLTSDDSDSDLNNIQGSGNTSWFSESSVGEDFFRYWEPSLELTSSDSQVTSSDDFPASKQIMASGTPNQNRHCISVSEVTSSKNCHDSLQSLWSLHSCMDKNNTTGKLGEELGLPSPVCNSCHESRLSDSHFFPSQMQEPFEEHNLECYSKAEKNDYSQYDIACYQHHEVNTTPILQQRSSAFSLSSLKPEETANPSQNSDSLIWDDLPLSESLNKFLAVVESEVAVTEIDAKNRKQGMDKSIDKCHKNYSRLSLTPWRNTRALNTSCFSLRSSQAMMKDSGKEALFSNCKSNSSPHIQKESKADKTEAAVSIAGSRSDISEDFLPDTCSSALFTSSKDREAFITQKRTSGVLQQRNEISCRPSTSISDCSDLRSRYFTGCGQKLHSGTKGKLAIQNCSKKYSDASDLHKLENKHRWPKKEDDNFTICRKLTYPLETLCSSPESINTSKEMPYRPSNNNLTPSSSGDHEGSYNASADLFDYIAKDKDIGTEITKIPQDNLLPLEVPCTENYPINENRGQPSQKPSLQSISPSRYSRPRSQSDSECDFEESQDFVPCSQSTPVAGFHQRIHGLNGASKILPSIYSNPNANYKNRKNSPLTGQYQATSACSKNVKAFRQKPESPFVSSLTQANVFNHCPAAESLGNDVDEWVPPTTKKVFISDILGFRVMGLRKCLDLHYSPDPKELPRKKLIKVTHKTNI.

Disordered regions lie at residues 191 to 210 (CGSQ…DSDL), 643 to 670 (SINT…HEGS), and 710 to 749 (YPIN…FEES). Composition is skewed to polar residues over residues 643-664 (SINT…PSSS) and 710-725 (YPIN…KPSL). Residues 726-741 (QSISPSRYSRPRSQSD) are compositionally biased toward low complexity.

As to expression, highly expressed in the testis, spleen and heart. Expressed at high levels in the primary spermatocytes and to a lesser extent in the round spermatids. Also found in the bone marrow, brain, lung, kidney and liver.

It localises to the cytoplasm. It is found in the nucleus. In terms of biological role, may be an anti-apoptotic protein involved in DNA repair or cell survival. The protein is DNA damage-induced apoptosis suppressor protein (Ddias) of Mus musculus (Mouse).